Consider the following 185-residue polypeptide: Ribosome-recycling factor (185 aa).

It belongs to the RRF family.

It is found in the cytoplasm. Responsible for the release of ribosomes from messenger RNA at the termination of protein biosynthesis. May increase the efficiency of translation by recycling ribosomes from one round of translation to another. This is Ribosome-recycling factor from Shewanella pealeana (strain ATCC 700345 / ANG-SQ1).